A 637-amino-acid polypeptide reads, in one-letter code: 1-deoxy-D-xylulose-5-phosphate synthase (637 aa).

Residues histidine 76 and 117 to 119 contribute to the thiamine diphosphate site; that span reads GHS. Aspartate 148 contributes to the Mg(2+) binding site. Thiamine diphosphate contacts are provided by residues 149–150, asparagine 177, tyrosine 294, and glutamate 381; that span reads GA. Asparagine 177 is a Mg(2+) binding site.

The protein belongs to the transketolase family. DXPS subfamily. Homodimer. It depends on Mg(2+) as a cofactor. Thiamine diphosphate serves as cofactor.

The catalysed reaction is D-glyceraldehyde 3-phosphate + pyruvate + H(+) = 1-deoxy-D-xylulose 5-phosphate + CO2. Its pathway is metabolic intermediate biosynthesis; 1-deoxy-D-xylulose 5-phosphate biosynthesis; 1-deoxy-D-xylulose 5-phosphate from D-glyceraldehyde 3-phosphate and pyruvate: step 1/1. Functionally, catalyzes the acyloin condensation reaction between C atoms 2 and 3 of pyruvate and glyceraldehyde 3-phosphate to yield 1-deoxy-D-xylulose-5-phosphate (DXP). The chain is 1-deoxy-D-xylulose-5-phosphate synthase from Neisseria gonorrhoeae (strain ATCC 700825 / FA 1090).